The following is a 271-amino-acid chain: MGNHQADKKFTWVIKNYNSLGSGSVYSDTFKAGRCKWRLLAFPKGNNIYDYFFLYICVPNSESLPSGWRRRAKVSFTMVNQIPGGLSQQREAVYWFDEKDTTHGFESMFLLSEIQSSDKGFLVNGEVKIVAEVDVLEVIGELDVPEEPERIDINGFQVPASQVESMNSLFEKYRGFASKIFPKNQHLRKTFLDVVLSMTEILCKFPEELSSGDLAEAYSALRFVTKAGFKLDWLEKKLKETGKSRLQEIEEDLKDLKVKCADMDALLDFLR.

The MATH domain maps to 7-133 (DKKFTWVIKN…NGEVKIVAEV (127 aa)). The stretch at 230–271 (KLDWLEKKLKETGKSRLQEIEEDLKDLKVKCADMDALLDFLR) forms a coiled coil.

The chain is MATH domain and coiled-coil domain-containing protein At3g27040 from Arabidopsis thaliana (Mouse-ear cress).